The following is a 2820-amino-acid chain: Neurofibromin (2820 aa).

Position 2 is an N-acetylalanine (Ala2). Ser866 and Ser878 each carry phosphoserine. In terms of domain architecture, Ras-GAP spans 1253-1463 (HLLYQLLWNM…DLARRFFLDI (211 aa)). In terms of domain architecture, CRAL-TRIO spans 1561-1719 (EKEEFKALKT…ATLALEEDLK (159 aa)). The segment at 1561–1818 (EKEEFKALKT…RTRWELSQPD (258 aa)) is lipid binding. Phosphoserine occurs at positions 2169 and 2448. A disordered region spans residues 2457-2482 (YPIHHGDPSSRTLKETQPWSSPRGSE). The span at 2458–2470 (PIHHGDPSSRTLK) shows a compositional bias: basic and acidic residues. At Thr2495 the chain carries Phosphothreonine. 4 positions are modified to phosphoserine: Ser2496, Ser2502, Ser2504, and Ser2524. The Bipartite nuclear localization signal signature appears at 2536–2552 (KRQEMESGITTPPKMRR). Thr2546 carries the post-translational modification Phosphothreonine. 3 positions are modified to phosphoserine: Ser2578, Ser2783, and Ser2798. Positions 2768 to 2820 (TSQHSPGIDKENVELSPTTGHCNSGRTRHGSASQVQKQRSAGSFKRNSIKKIV) are disordered. Polar residues predominate over residues 2782–2808 (LSPTTGHCNSGRTRHGSASQVQKQRSA).

In terms of assembly, interacts with HTR6. Interacts with SPRED2. Ubiquitinated by RNF7/RBX2, leading to its degradation.

The protein resides in the nucleus. The protein localises to the nucleolus. Its subcellular location is the cell membrane. In terms of biological role, stimulates the GTPase activity of Ras. NF1 shows greater affinity for Ras GAP, but lower specific activity. May be a regulator of Ras activity. This is Neurofibromin (Nf1) from Rattus norvegicus (Rat).